Here is a 134-residue protein sequence, read N- to C-terminus: Histone H2A (134 aa).

Residues 1-11 (MTGGGKSGGKA) show a composition bias toward gly residues. The disordered stretch occupies residues 1-24 (MTGGGKSGGKASGSKNAQSRSSKA). N6-acetyllysine occurs at positions 6 and 10. Q107 carries the post-translational modification N5-methylglutamine.

This sequence belongs to the histone H2A family. The nucleosome is a histone octamer containing two molecules each of H2A, H2B, H3 and H4 assembled in one H3-H4 heterotetramer and two H2A-H2B heterodimers. The octamer wraps approximately 147 bp of DNA. In terms of processing, acetylated by ESA1 to form H2AK4ac and H2AK7ac.

It is found in the nucleus. The protein localises to the chromosome. Functionally, core component of nucleosome. Nucleosomes wrap and compact DNA into chromatin, limiting DNA accessibility to the cellular machineries which require DNA as a template. Histones thereby play a central role in transcription regulation, DNA repair, DNA replication and chromosomal stability. DNA accessibility is regulated via a complex set of post-translational modifications of histones, also called histone code, and nucleosome remodeling. The chain is Histone H2A (HTA1) from Gibberella zeae (strain ATCC MYA-4620 / CBS 123657 / FGSC 9075 / NRRL 31084 / PH-1) (Wheat head blight fungus).